Consider the following 244-residue polypeptide: Small ribosomal subunit protein uS3 (244 aa).

The region spanning 39–107 (VREMLRKKLA…PAHINVTEVR (69 aa)) is the KH type-2 domain. A disordered region spans residues 213 to 244 (VGQEKQDDSPRNDRNDRGDRGDRPSRPAREAR). Over residues 216–244 (EKQDDSPRNDRNDRGDRGDRPSRPAREAR) the composition is skewed to basic and acidic residues.

The protein belongs to the universal ribosomal protein uS3 family. As to quaternary structure, part of the 30S ribosomal subunit. Forms a tight complex with proteins S10 and S14.

In terms of biological role, binds the lower part of the 30S subunit head. Binds mRNA in the 70S ribosome, positioning it for translation. The sequence is that of Small ribosomal subunit protein uS3 from Xanthomonas oryzae pv. oryzae (strain MAFF 311018).